The chain runs to 347 residues: Putative phosphoesterase 078R (347 aa).

Asp-52, Asn-87, and His-211 together coordinate a divalent metal cation.

Belongs to the metallophosphoesterase superfamily. IIV-6 244L family.

The polypeptide is Putative phosphoesterase 078R (Invertebrate iridescent virus 3 (IIV-3)).